Consider the following 164-residue polypeptide: Mediator of RNA polymerase II transcription subunit 21 (164 aa).

The interval 49-81 is disordered; it reads APLPANQTQQGSTLGSNRQTVSPSTQAEAESNF. Residues 53–81 show a composition bias toward polar residues; that stretch reads ANQTQQGSTLGSNRQTVSPSTQAEAESNF. Residues 114–146 are a coiled coil; sequence ESQLKIIDDLSKELQSVEQEQVKKIQEKDKLLK.

The protein belongs to the Mediator complex subunit 21 family. In terms of assembly, component of the Mediator complex.

It localises to the nucleus. Functionally, component of the Mediator complex, a coactivator involved in the regulated transcription of nearly all RNA polymerase II-dependent genes. Mediator functions as a bridge to convey information from gene-specific regulatory proteins to the basal RNA polymerase II transcription machinery. Mediator is recruited to promoters by direct interactions with regulatory proteins and serves as a scaffold for the assembly of a functional preinitiation complex with RNA polymerase II and the general transcription factors. In Scheffersomyces stipitis (strain ATCC 58785 / CBS 6054 / NBRC 10063 / NRRL Y-11545) (Yeast), this protein is Mediator of RNA polymerase II transcription subunit 21 (SRB7).